Reading from the N-terminus, the 388-residue chain is Formate-dependent phosphoribosylglycinamide formyltransferase (388 aa).

Residues 21 to 22 and Glu-81 contribute to the N(1)-(5-phospho-beta-D-ribosyl)glycinamide site; that span reads EL. Residues Arg-113, Lys-154, 159–164, 193–196, and Glu-201 contribute to the ATP site; these read SSGHGQ and EEFI. In terms of domain architecture, ATP-grasp spans 118 to 306; that stretch reads KFAAEELGLK…EFALHVRAVL (189 aa). Residues Glu-265 and Glu-277 each contribute to the Mg(2+) site. N(1)-(5-phospho-beta-D-ribosyl)glycinamide is bound by residues Asp-284, Lys-352, and 359–360; that span reads RR.

This sequence belongs to the PurK/PurT family. Homodimer.

It carries out the reaction N(1)-(5-phospho-beta-D-ribosyl)glycinamide + formate + ATP = N(2)-formyl-N(1)-(5-phospho-beta-D-ribosyl)glycinamide + ADP + phosphate + H(+). The protein operates within purine metabolism; IMP biosynthesis via de novo pathway; N(2)-formyl-N(1)-(5-phospho-D-ribosyl)glycinamide from N(1)-(5-phospho-D-ribosyl)glycinamide (formate route): step 1/1. Functionally, involved in the de novo purine biosynthesis. Catalyzes the transfer of formate to 5-phospho-ribosyl-glycinamide (GAR), producing 5-phospho-ribosyl-N-formylglycinamide (FGAR). Formate is provided by PurU via hydrolysis of 10-formyl-tetrahydrofolate. This Nitratiruptor sp. (strain SB155-2) protein is Formate-dependent phosphoribosylglycinamide formyltransferase.